Consider the following 349-residue polypeptide: Glycosyltransferase 8 domain-containing protein 2 (349 aa).

At 1–6 the chain is on the cytoplasmic side; it reads MALLRK. Residues 7–24 traverse the membrane as a helical; Signal-anchor for type II membrane protein segment; sequence INQVLLFLLIVTLCVILY. Over 25–349 the chain is Lumenal; the sequence is KKVHKGTVSK…AGIFKLNHHS (325 aa). N-linked (GlcNAc...) asparagine glycosylation occurs at Asn-234.

It belongs to the glycosyltransferase 8 family.

It is found in the membrane. This Macaca fascicularis (Crab-eating macaque) protein is Glycosyltransferase 8 domain-containing protein 2 (GLT8D2).